Consider the following 100-residue polypeptide: Cytochrome bo(3) ubiquinol oxidase subunit 4 (100 aa).

Residues 1-9 are Cytoplasmic-facing; it reads MLKNRYLKY. Residues 10–32 form a helical membrane-spanning segment; sequence LFILILLSILSIMPIFAIIYRIF. Residues 33–36 lie on the Extracellular side of the membrane; the sequence is SRNY. The helical transmembrane segment at 37–59 threads the bilayer; the sequence is LYAFIIVCLFFQILAHIKFFLNL. Over 60-68 the chain is Cytoplasmic; sequence DFSLEQRWK. The helical transmembrane segment at 69 to 90 threads the bilayer; that stretch reads LISVIFSLVVGLIILLGSIWVI. The Extracellular segment spans residues 91–100; it reads KNLNNNLCIM.

It belongs to the cytochrome c oxidase bacterial subunit 4 family. In terms of assembly, heterooctamer of two A chains, two B chains, two C chains and two D chains.

It is found in the cell membrane. Functionally, cytochrome bo(3) ubiquinol terminal oxidase is the component of the aerobic respiratory chain of E.coli that predominates when cells are grown at high aeration. Has proton pump activity across the membrane in addition to electron transfer, pumping 2 protons/electron. The polypeptide is Cytochrome bo(3) ubiquinol oxidase subunit 4 (cyoD) (Buchnera aphidicola subsp. Baizongia pistaciae (strain Bp)).